Consider the following 558-residue polypeptide: Dihydroxy-acid dehydratase (558 aa).

D81 contributes to the Mg(2+) binding site. C122 serves as a coordination point for [2Fe-2S] cluster. D123 and K124 together coordinate Mg(2+). K124 carries the post-translational modification N6-carboxylysine. A [2Fe-2S] cluster-binding site is contributed by C195. E447 contributes to the Mg(2+) binding site. Catalysis depends on S473, which acts as the Proton acceptor.

This sequence belongs to the IlvD/Edd family. Homodimer. [2Fe-2S] cluster is required as a cofactor. The cofactor is Mg(2+).

It carries out the reaction (2R)-2,3-dihydroxy-3-methylbutanoate = 3-methyl-2-oxobutanoate + H2O. It catalyses the reaction (2R,3R)-2,3-dihydroxy-3-methylpentanoate = (S)-3-methyl-2-oxopentanoate + H2O. It functions in the pathway amino-acid biosynthesis; L-isoleucine biosynthesis; L-isoleucine from 2-oxobutanoate: step 3/4. It participates in amino-acid biosynthesis; L-valine biosynthesis; L-valine from pyruvate: step 3/4. Functionally, functions in the biosynthesis of branched-chain amino acids. Catalyzes the dehydration of (2R,3R)-2,3-dihydroxy-3-methylpentanoate (2,3-dihydroxy-3-methylvalerate) into 2-oxo-3-methylpentanoate (2-oxo-3-methylvalerate) and of (2R)-2,3-dihydroxy-3-methylbutanoate (2,3-dihydroxyisovalerate) into 2-oxo-3-methylbutanoate (2-oxoisovalerate), the penultimate precursor to L-isoleucine and L-valine, respectively. In Bacillus subtilis (strain 168), this protein is Dihydroxy-acid dehydratase.